The primary structure comprises 857 residues: Leucine--tRNA ligase (857 aa).

The 'HIGH' region signature appears at 42-52 (PYPSGKLHMGH). Positions 620–624 (KMSKS) match the 'KMSKS' region motif. Lys-623 provides a ligand contact to ATP.

This sequence belongs to the class-I aminoacyl-tRNA synthetase family.

Its subcellular location is the cytoplasm. The enzyme catalyses tRNA(Leu) + L-leucine + ATP = L-leucyl-tRNA(Leu) + AMP + diphosphate. The polypeptide is Leucine--tRNA ligase (Thiobacillus denitrificans (strain ATCC 25259 / T1)).